The following is a 595-amino-acid chain: Elongation factor 4 (595 aa).

The 183-residue stretch at 2-184 folds into the tr-type G domain; sequence KNIRNFSIIA…QIVEKIPAPK (183 aa). Residues 14-19 and 131-134 contribute to the GTP site; these read DHGKST and NKID.

It belongs to the TRAFAC class translation factor GTPase superfamily. Classic translation factor GTPase family. LepA subfamily.

It is found in the cell inner membrane. The enzyme catalyses GTP + H2O = GDP + phosphate + H(+). Its function is as follows. Required for accurate and efficient protein synthesis under certain stress conditions. May act as a fidelity factor of the translation reaction, by catalyzing a one-codon backward translocation of tRNAs on improperly translocated ribosomes. Back-translocation proceeds from a post-translocation (POST) complex to a pre-translocation (PRE) complex, thus giving elongation factor G a second chance to translocate the tRNAs correctly. Binds to ribosomes in a GTP-dependent manner. The chain is Elongation factor 4 from Ruthia magnifica subsp. Calyptogena magnifica.